The sequence spans 256 residues: Ubiquinone/menaquinone biosynthesis C-methyltransferase UbiE (256 aa).

Basic and acidic residues predominate over residues 1–12; that stretch reads MNDQRKGDHAEP. The tract at residues 1–23 is disordered; it reads MNDQRKGDHAEPTTHFGYQDVPE. Residues threonine 79, aspartate 100, and 128-129 contribute to the S-adenosyl-L-methionine site; that span reads DA.

Belongs to the class I-like SAM-binding methyltransferase superfamily. MenG/UbiE family.

It carries out the reaction a 2-demethylmenaquinol + S-adenosyl-L-methionine = a menaquinol + S-adenosyl-L-homocysteine + H(+). It catalyses the reaction a 2-methoxy-6-(all-trans-polyprenyl)benzene-1,4-diol + S-adenosyl-L-methionine = a 5-methoxy-2-methyl-3-(all-trans-polyprenyl)benzene-1,4-diol + S-adenosyl-L-homocysteine + H(+). The protein operates within quinol/quinone metabolism; menaquinone biosynthesis; menaquinol from 1,4-dihydroxy-2-naphthoate: step 2/2. It participates in cofactor biosynthesis; ubiquinone biosynthesis. In terms of biological role, methyltransferase required for the conversion of demethylmenaquinol (DMKH2) to menaquinol (MKH2) and the conversion of 2-polyprenyl-6-methoxy-1,4-benzoquinol (DDMQH2) to 2-polyprenyl-3-methyl-6-methoxy-1,4-benzoquinol (DMQH2). This chain is Ubiquinone/menaquinone biosynthesis C-methyltransferase UbiE, found in Pseudomonas putida (strain GB-1).